The following is a 1069-amino-acid chain: Thyrotropin-releasing hormone-degrading ectoenzyme (1069 aa).

Over residues 1-11 the composition is skewed to acidic residues; that stretch reads MALDGELGEQE. The interval 1 to 46 is disordered; that stretch reads MALDGELGEQEEEKKKKKKKKRKKKKEEEEEEEGAEKSSSPFAAAM. Topologically, residues 1–85 are cytoplasmic; sequence MALDGELGEQ…ERHIAVHKRL (85 aa). Basic residues predominate over residues 15-25; it reads KKKKKKKRKKK. A helical; Signal-anchor for type II membrane protein membrane pass occupies residues 86 to 106; the sequence is VLAFAVSLVALLAVTMLAVLL. Residues 107 to 1069 lie on the Extracellular side of the membrane; that stretch reads SLRFDECGAS…FQWLGKALRH (963 aa). Residues 117–179 are disordered; that stretch reads ATPGADGGPS…PSEEEREPWE (63 aa). A compositionally biased stretch (gly residues) spans 121-136; it reads ADGGPSGFPERGGNGS. Residues asparagine 134, asparagine 205, asparagine 220, asparagine 267, and asparagine 383 are each glycosylated (N-linked (GlcNAc...) asparagine). A substrate-binding site is contributed by 449–453; that stretch reads AAMEN. Histidine 485 lines the Zn(2+) pocket. Glutamate 486 acts as the Proton acceptor in catalysis. Residues histidine 489 and glutamate 508 each coordinate Zn(2+). Residues asparagine 650, asparagine 679, asparagine 694, asparagine 708, asparagine 729, asparagine 845, and asparagine 951 are each glycosylated (N-linked (GlcNAc...) asparagine).

The protein belongs to the peptidase M1 family. In terms of assembly, homodimer; disulfide-linked. Zn(2+) serves as cofactor. As to expression, predominantly expressed in brain.

The protein localises to the membrane. The catalysed reaction is Release of the N-terminal pyroglutamyl group from pGlu-|-His-Xaa tripeptides and pGlu-|-His-Xaa-Gly tetrapeptides.. Functionally, specific inactivation of TRH after its release. The protein is Thyrotropin-releasing hormone-degrading ectoenzyme (TRHDE) of Homo sapiens (Human).